Reading from the N-terminus, the 256-residue chain is MNNIWWQTKGQGNVHLVLLHGWGLNAEVWRCIDEELSSHFTLHLVDLPGFGRSRGFGAMSLADMAEAVLRQAPDKAIWLGWSLGGLVASQIALTHPERVQALVTVASSPCFSARDEWPGIKPDVLAGFQQQLSDDFQRTVERFLALQTMGTETARQDARALKKTVLALPMPEVDVLNGGLEILKTVDLRQPLQNVFMPFLRLYGYLDGLVPRKVVPMLDKLWPHSESYIFAKAAHAPFISHPAEFCRMLVALKQRV.

The AB hydrolase-1 domain maps to 15–242; that stretch reads HLVLLHGWGL…AAHAPFISHP (228 aa). Substrate-binding positions include Trp-22, 82 to 83, and 143 to 147; these read SL and FLALQ. The active-site Nucleophile is Ser-82. Catalysis depends on residues Asp-207 and His-235. His-235 serves as a coordination point for substrate.

The protein belongs to the AB hydrolase superfamily. Carboxylesterase BioH family. In terms of assembly, monomer.

It is found in the cytoplasm. The catalysed reaction is 6-carboxyhexanoyl-[ACP] methyl ester + H2O = 6-carboxyhexanoyl-[ACP] + methanol + H(+). It participates in cofactor biosynthesis; biotin biosynthesis. In terms of biological role, the physiological role of BioH is to remove the methyl group introduced by BioC when the pimeloyl moiety is complete. It allows to synthesize pimeloyl-ACP via the fatty acid synthetic pathway through the hydrolysis of the ester bonds of pimeloyl-ACP esters. The chain is Pimeloyl-[acyl-carrier protein] methyl ester esterase from Escherichia coli O7:K1 (strain IAI39 / ExPEC).